Consider the following 222-residue polypeptide: Protein GrpE (222 aa).

Positions 1–64 are disordered; the sequence is MSDQNLGQGS…GEEILSDDDL (64 aa). The span at 16–44 shows a compositional bias: basic and acidic residues; that stretch reads EEPIVRDKRRIDPETGKVREPQDLSHEEL. Positions 54–64 are enriched in acidic residues; that stretch reads QGEEILSDDDL.

It belongs to the GrpE family. In terms of assembly, homodimer.

Its subcellular location is the cytoplasm. Functionally, participates actively in the response to hyperosmotic and heat shock by preventing the aggregation of stress-denatured proteins, in association with DnaK and GrpE. It is the nucleotide exchange factor for DnaK and may function as a thermosensor. Unfolded proteins bind initially to DnaJ; upon interaction with the DnaJ-bound protein, DnaK hydrolyzes its bound ATP, resulting in the formation of a stable complex. GrpE releases ADP from DnaK; ATP binding to DnaK triggers the release of the substrate protein, thus completing the reaction cycle. Several rounds of ATP-dependent interactions between DnaJ, DnaK and GrpE are required for fully efficient folding. The chain is Protein GrpE from Leifsonia xyli subsp. xyli (strain CTCB07).